The following is a 232-amino-acid chain: Sugar fermentation stimulation protein homolog (232 aa).

Belongs to the SfsA family.

The chain is Sugar fermentation stimulation protein homolog from Geobacter metallireducens (strain ATCC 53774 / DSM 7210 / GS-15).